Consider the following 205-residue polypeptide: Methylamine utilization protein MauD (205 aa).

Residues 5–25 (IMIASNVLLWGAFLALAALML) traverse the membrane as a helical segment. In terms of domain architecture, Thioredoxin spans 50-184 (PDIGERSPVF…VESLFETTRV (135 aa)).

It localises to the membrane. The protein operates within one-carbon metabolism; methylamine degradation. May be specifically involved in the processing, transport, and/or maturation of the MADH beta-subunit. In Methylobacillus flagellatus (strain ATCC 51484 / DSM 6875 / VKM B-1610 / KT), this protein is Methylamine utilization protein MauD (mauD).